A 708-amino-acid chain; its full sequence is MDKVLNREESLQLMDLLGLERSAWGNIPLMRKAYLKKCKEFHPDKGGDEEKMKKMNTLYKKMEDGVKYAHQPDFGGFWDATEIPTYGTDEWEQWWNAFNEENLFCSEEMPSSDDEATADSQHSTPPKKKRKVEDPKDFPSELLSFLSHAVFSNRTLACFAIYTTKEKAALLYKKIMEKYSVTFISRHNSYNHNILFFLTPHRHRVSAINNYAQKLCTFSFLICKGVNKEYLMYSALTRDPFSVIEESLPGGLKEHDFNPEEAEETKQVSWKLVTEYAMETKCDDVLLLLGMYLEFQYSFEMCLKCIKKEQPSHYKYHEKHYANAAIFADSKNQKTICQQAVDTVLAKKRVDSLQLTREQMLTNRFNDLLDRMDIMFGSTGSADIEEWMAGVAWLHCLLPKMDSVVYDFLKCMVYNIPKKRYWLFKGPIDSGKTTLAAALLELCGGKALNVNLPLDRLNFELGVAIDQFLVVFEDVKGTGGESRDLPSGQGINNLDNLRDYLDGSVKVNLEKKHLNKRTQIFPPGIVTMNEYSVPKTLQARFVKQIDFRPKDYLKHCLERSEFLLEKRIIQSGIALLLMLIWYRPVAEFAQSIQSRIVEWKERLDKEFSLSVYQKMKFNVAMGIGVLDWLRNSDDDDEDSQENADKNEDGGEKNMEDSGHETGIDSQSQGSFQAPQSSQSVHDHNQPYHICRGFTCFKKPPTPPPEPET.

N-acetylmethionine; by host is present on M1. The J domain occupies 12-75; that stretch reads QLMDLLGLER…VKYAHQPDFG (64 aa). Residues 63-89 are binding of LT to the CUL7 complex; sequence EDGVKYAHQPDFGGFWDATEIPTYGTD. An LXCXE motif motif is present at residues 103-107; sequence LFCSE. Phosphoserine; by host is present on residues S106, S112, S120, and S123. The disordered stretch occupies residues 109 to 134; it reads MPSSDDEATADSQHSTPPKKKRKVED. Residue T124 is modified to Phosphothreonine; by host. The Nuclear localization signal motif lies at 125 to 132; the sequence is PPKKKRKV. Residues 139–254 constitute a DNA-binding region (T-ag OBD); that stretch reads PSELLSFLSH…EESLPGGLKE (116 aa). The T-ag D1-type zinc finger occupies 265 to 357; sequence TKQVSWKLVT…KRVDSLQLTR (93 aa). Zn(2+)-binding residues include C302, C305, H313, and H317. The interval 337–672 is binding to host TP53 protein; it reads CQQAVDTVLA…IDSQSQGSFQ (336 aa). An SF3 helicase domain is found at 400-560; it reads KMDSVVYDFL…DYLKHCLERS (161 aa). Positions 418-616 are ATPase activity; it reads KKRYWLFKGP…FSLSVYQKMK (199 aa). 426–433 lines the ATP pocket; it reads GPIDSGKT. Residues 627–708 form a C-terminal region region; the sequence is DWLRNSDDDD…PPTPPPEPET (82 aa). A disordered region spans residues 630–685; it reads RNSDDDDEDSQENADKNEDGGEKNMEDSGHETGIDSQSQGSFQAPQSSQSVHDHNQ. Position 639 is a phosphoserine; by host (S639). The span at 642–662 shows a compositional bias: basic and acidic residues; that stretch reads NADKNEDGGEKNMEDSGHETG. The span at 663–679 shows a compositional bias: polar residues; the sequence is IDSQSQGSFQAPQSSQS. Phosphoserine; by host occurs at positions 676, 677, and 679. K697 is modified (N6-acetyllysine; by host). Positions 699-708 are CPD; it reads PPTPPPEPET. T701 carries the post-translational modification Phosphothreonine; by host.

As to quaternary structure, isoform large T antigen forms homohexamers in the presence of ATP. Interacts with host HDAC1. Interacts (via LXCXE domain) with host RB1; the interaction induces the aberrant dissociation of RB1-E2F1 complex thereby disrupting RB1's activity. Interacts (via LXCXE domain) with host pRB-related proteins RBL1 and RBL2. Interacts (via C-terminus) with host TOP1 and POLA1 allowing DNA replication. Interacts with host TP53, inhibiting TP53 binding to DNA. Interacts with host preinitiation complex components TBP, TFIIA and TFIID to regulate transcription initiation. LT interacts (via CPD region) with host FBW7gamma isoform (via WD repeats); seems to function as a competitive inhibitor of FBW7gamma function for physiologic substrates. LT interacts with host E3 ubiquitin ligase CUL7; this interaction seems to inhibit CUL7. Component of a SCF(CUL7)-like complex composed of SV40 Lt and host proteins CUL7, SKP1, RBX1, and FBXW8. LT interacts with host BUB1; this interaction induces activation of a DNA damage response and promotes p53 stabilization and phosphorylation. Interacts with host FAM111A and this interaction is required for efficient viral replication and sustained viral gene expression in restrictive cell types. The cofactor is Mg(2+). In terms of processing, phosphorylated on both serine and threonine residues. Phosphorylation on Ser-120 and Ser-123 inhibits viral replication, while phosphorylation on Thr-124 enhances replication by activating the DNA-binding domain. Phosphorylation on Thr-701 is required for binding to host FBW7gamma isoform. Dephosphorylated preferentially by PP2A on Ser-120, Ser-123, Ser-677 and perhaps Ser-679. Small t antigen inhibits the dephosphorylation by the AC form of PP2A. Post-translationally, O-Glycosylated near the C-terminal region. Acetylated by CBP in a TP53-dependent manner.

It is found in the host nucleus. It catalyses the reaction Couples ATP hydrolysis with the unwinding of duplex DNA by translocating in the 3'-5' direction.. It carries out the reaction ATP + H2O = ADP + phosphate + H(+). DNA helicase activity is inhibited by ATP-gamma-S. Its function is as follows. Isoform large T antigen is a key early protein essential for both driving viral replication and inducing cellular transformation. Plays a role in viral genome replication by driving entry of quiescent cells into the cell cycle and by autoregulating the synthesis of viral early mRNA. Displays highly oncogenic activities by corrupting the host cellular checkpoint mechanisms that guard cell division and the transcription, replication, and repair of DNA. Participates in the modulation of cellular gene expression preceeding viral DNA replication. This step involves binding to host key cell cycle regulators retinoblastoma protein RB1/pRb and TP53. Induces the disassembly of host E2F1 transcription factors from RB1, thus promoting transcriptional activation of E2F1-regulated S-phase genes. Inhibits host TP53 binding to DNA, abrogating the ability of TP53 to stimulate gene expression. Plays the role of a TFIID-associated factor (TAF) in transcription initiation for all three RNA polymerases, by stabilizing the TBP-TFIIA complex on promoters. Initiates viral DNA replication and unwinding via interactions with the viral origin of replication. Binds two adjacent sites in the SV40 origin. The replication fork movement is facilitated by Large T antigen helicase activity. Has processive 3'-5' DNA helicase activity which requires a short 3' single-stranded region and ATP; other (d)NTPs can partially replace ATP. Activates the transcription of viral late mRNA, through host TBP and TFIIA stabilization. Interferes with histone deacetylation mediated by HDAC1, leading to activation of transcription. May inactivate the growth-suppressing properties of the E3 ubiquitin ligase CUL7. In terms of biological role, isoform 17kT antigen targets host RBL2 for degradation and promotes cell proliferation. Transactivates host cyclin A promoter through its J domain. Functionally, unwinds G4 DNA (planar arrays of 4 guanine bases stabilized by hydrogen bonds, parallel and antiparallel arrays were tested); unwinding occurs in the 3'-5' direction, requires a 3' single-stranded end and hydrolyzable ATP. The polypeptide is Large T antigen (Macaca (macaques)).